The following is a 463-amino-acid chain: O-acetyltransferase SAT5 (463 aa).

Belongs to the trichothecene 3-O-acetyltransferase family.

It functions in the pathway mycotoxin biosynthesis. In terms of biological role, O-acetyltransferase; part of the satratoxin SC1 cluster involved in the biosynthesis of satratoxins, trichothecene mycotoxins that are associated with human food poisonings. Satratoxins are suggested to be made by products of multiple gene clusters (SC1, SC2 and SC3) that encode 21 proteins in all, including polyketide synthases, acetyltransferases, and other enzymes expected to modify the trichothecene skeleton. SC1 encodes 10 proteins, SAT1 to SAT10. The largest are SAT8, which encodes a putative polyketide synthase (PKS) with a conventional non-reducing architecture, and SAT10, a putative protein containing four ankyrin repeats and thus may be involved in protein scaffolding. The putative short-chain reductase SAT3 may assist the PKS in some capacity. SAT6 contains a secretory lipase domain and acts probably as a trichothecene esterase. SAT5 encodes a putative acetyltransferase, and so, with SAT6, may affect endogenous protection from toxicity. The probable transcription factor SAT9 may regulate the expression of the SC1 cluster. SC2 encodes proteins SAT11 to SAT16, the largest of which encodes the putative reducing PKS SAT13. SAT11 is a cytochrome P450 monooxygenase, while SAT14 and SAT16 are probable acetyltransferases. The SC2 cluster may be regulated by the transcription factor SAT15. SC3 is a small cluster that encodes 5 proteins, SAT17 to SAT21. SAT21 is a putative MFS-type transporter which may have a role in exporting secondary metabolites. The four other proteins putatively encoded in SC3 include the taurine hydroxylase-like protein SAT17, the O-methyltransferase SAT18, the acetyltransferase SAT19, and the Cys6-type zinc finger SAT20, the latter being probably involved in regulation of SC3 expression. The chain is O-acetyltransferase SAT5 from Stachybotrys chartarum (strain CBS 109288 / IBT 7711) (Toxic black mold).